Consider the following 380-residue polypeptide: 3-dehydroquinate synthase (380 aa).

NAD(+) is bound by residues 100 to 104 (GAASD), 124 to 125 (TT), Lys-137, and Lys-146. Positions 179, 251, and 267 each coordinate Zn(2+).

Belongs to the sugar phosphate cyclases superfamily. Dehydroquinate synthase family. Requires NAD(+) as cofactor. It depends on Co(2+) as a cofactor. The cofactor is Zn(2+).

The protein resides in the cytoplasm. The catalysed reaction is 7-phospho-2-dehydro-3-deoxy-D-arabino-heptonate = 3-dehydroquinate + phosphate. It participates in metabolic intermediate biosynthesis; chorismate biosynthesis; chorismate from D-erythrose 4-phosphate and phosphoenolpyruvate: step 2/7. Functionally, catalyzes the conversion of 3-deoxy-D-arabino-heptulosonate 7-phosphate (DAHP) to dehydroquinate (DHQ). The protein is 3-dehydroquinate synthase of Tropheryma whipplei (strain TW08/27) (Whipple's bacillus).